The chain runs to 421 residues: ATP-dependent RNA helicase RhlB (421 aa).

Residues Gln9–Ala37 carry the Q motif motif. The Helicase ATP-binding domain maps to Leu40–Val219. Ala53 to Thr60 is an ATP binding site. The DEAD box signature appears at Asp165–Asp168. The Helicase C-terminal domain occupies Arg245–Met390. Positions Pro396–Gly421 are disordered. A compositionally biased stretch (low complexity) spans Ser402 to Pro414.

This sequence belongs to the DEAD box helicase family. RhlB subfamily. Component of the RNA degradosome, which is a multiprotein complex involved in RNA processing and mRNA degradation.

It is found in the cytoplasm. It catalyses the reaction ATP + H2O = ADP + phosphate + H(+). In terms of biological role, DEAD-box RNA helicase involved in RNA degradation. Has RNA-dependent ATPase activity and unwinds double-stranded RNA. This Salmonella paratyphi A (strain AKU_12601) protein is ATP-dependent RNA helicase RhlB.